Here is a 723-residue protein sequence, read N- to C-terminus: Aminodeoxychorismate synthase (723 aa).

One can recognise a Glutamine amidotransferase type-1 domain in the interval 2-195 (RTLLVDNYDS…RDLTERHGRT (194 aa)). Cysteine 82 acts as the Nucleophile in catalysis. The segment at 96 to 117 (VGRAPEPRHGRTSAVRHDGTGL) is disordered. A compositionally biased stretch (basic and acidic residues) spans 98-114 (RAPEPRHGRTSAVRHDG). Active-site residues include histidine 169 and glutamate 171. Disordered stretches follow at residues 192–219 (HGRT…KATT) and 693–723 (FPGR…VLPG). The interval 255-723 (LDSSRPGGEL…GAPKDLVLPG (469 aa)) is PABB component. Residues 695-704 (GRERPGKDLD) show a composition bias toward basic and acidic residues.

It in the C-terminal section; belongs to the anthranilate synthase component I family.

The catalysed reaction is chorismate + L-glutamine = 4-amino-4-deoxychorismate + L-glutamate. The protein operates within antibiotic biosynthesis; candicidin biosynthesis. Its function is as follows. Involved in candicidin biosynthesis. Catalyzes the biosynthesis of 4-amino-4-deoxychorismate (ADC) from chorismate and glutamine. This Streptomyces griseus protein is Aminodeoxychorismate synthase.